Here is a 399-residue protein sequence, read N- to C-terminus: S-adenosylmethionine synthase (399 aa).

Histidine 17 lines the ATP pocket. Position 19 (aspartate 19) interacts with Mg(2+). Glutamate 45 contributes to the K(+) binding site. Residues glutamate 58 and glutamine 101 each contribute to the L-methionine site. The segment at 101–111 (QSADIAMGVDQ) is flexible loop. Residues 177–179 (DGK), 244–245 (RF), aspartate 253, 259–260 (RK), alanine 276, and lysine 280 each bind ATP. Aspartate 253 contributes to the L-methionine binding site. Lysine 284 contacts L-methionine.

Belongs to the AdoMet synthase family. As to quaternary structure, homotetramer; dimer of dimers. Mg(2+) serves as cofactor. It depends on K(+) as a cofactor.

It is found in the cytoplasm. It catalyses the reaction L-methionine + ATP + H2O = S-adenosyl-L-methionine + phosphate + diphosphate. It participates in amino-acid biosynthesis; S-adenosyl-L-methionine biosynthesis; S-adenosyl-L-methionine from L-methionine: step 1/1. Functionally, catalyzes the formation of S-adenosylmethionine (AdoMet) from methionine and ATP. The overall synthetic reaction is composed of two sequential steps, AdoMet formation and the subsequent tripolyphosphate hydrolysis which occurs prior to release of AdoMet from the enzyme. The polypeptide is S-adenosylmethionine synthase (Bacillus mycoides (strain KBAB4) (Bacillus weihenstephanensis)).